The sequence spans 551 residues: Colicin-E6 (551 aa).

Disordered stretches follow at residues 1 to 74 (MSGG…SGGG), 244 to 269 (LSPG…NTRD), 293 to 317 (PDQV…HPVE), 406 to 501 (NKQA…WYGD), and 517 to 551 (EGYR…KKYL). Over residues 20–35 (INGGPTGLGVGGGASD) the composition is skewed to gly residues. A compositionally biased stretch (low complexity) spans 36 to 45 (GSGWSSENNP). Residues 46–74 (WGGGSGSGIHWGGGSGHGNGGGNGNSGGG) show a composition bias toward gly residues. Basic and acidic residues-rich tracts occupy residues 296–317 (VKQR…HPVE) and 430–484 (ESRK…EGKP). Positions 455 to 551 (KGVKDYGHDY…DPKRNIKKYL (97 aa)) are ribosome inactivating activity. Positions 530–551 (FEPKTGNQLKGPDPKRNIKKYL) are binding of immunity protein.

This sequence belongs to the cloacin colicin family.

Its function is as follows. Inactivates ribosomes by hydrolyzing 16S RNA in 30S ribosomes at a specific site. Functionally, colicins are polypeptide toxins produced by and active against E.coli and closely related bacteria. The polypeptide is Colicin-E6 (Escherichia coli).